The following is a 495-amino-acid chain: Lysine--tRNA ligase (495 aa).

Mg(2+)-binding residues include Glu-406 and Glu-413.

It belongs to the class-II aminoacyl-tRNA synthetase family. In terms of assembly, homodimer. Mg(2+) is required as a cofactor.

The protein localises to the cytoplasm. It catalyses the reaction tRNA(Lys) + L-lysine + ATP = L-lysyl-tRNA(Lys) + AMP + diphosphate. The polypeptide is Lysine--tRNA ligase (Staphylococcus aureus (strain COL)).